The following is a 416-amino-acid chain: Serine hydroxymethyltransferase (416 aa).

(6S)-5,6,7,8-tetrahydrofolate-binding positions include Leu118 and 122–124; that span reads GHL. Lys226 carries the N6-(pyridoxal phosphate)lysine modification. Residues Glu242 and 350–352 each bind (6S)-5,6,7,8-tetrahydrofolate; that span reads SPF.

The protein belongs to the SHMT family. As to quaternary structure, homodimer. Requires pyridoxal 5'-phosphate as cofactor.

Its subcellular location is the cytoplasm. The catalysed reaction is (6R)-5,10-methylene-5,6,7,8-tetrahydrofolate + glycine + H2O = (6S)-5,6,7,8-tetrahydrofolate + L-serine. It participates in one-carbon metabolism; tetrahydrofolate interconversion. Its pathway is amino-acid biosynthesis; glycine biosynthesis; glycine from L-serine: step 1/1. In terms of biological role, catalyzes the reversible interconversion of serine and glycine with tetrahydrofolate (THF) serving as the one-carbon carrier. This reaction serves as the major source of one-carbon groups required for the biosynthesis of purines, thymidylate, methionine, and other important biomolecules. Also exhibits THF-independent aldolase activity toward beta-hydroxyamino acids, producing glycine and aldehydes, via a retro-aldol mechanism. The polypeptide is Serine hydroxymethyltransferase (Helicobacter acinonychis (strain Sheeba)).